Consider the following 68-residue polypeptide: Large ribosomal subunit protein uL29 (68 aa).

It belongs to the universal ribosomal protein uL29 family.

This Pyrococcus abyssi (strain GE5 / Orsay) protein is Large ribosomal subunit protein uL29 (rpl29).